The sequence spans 292 residues: UPF0761 membrane protein Ping_3482 (292 aa).

6 helical membrane passes run 43–63, 100–120, 139–159, 179–199, 209–229, and 243–263; these read LLSI…FPVF, MSMM…STID, FTIY…SLAL, LLSL…YTLV, ALIG…LFRL, and ALAV…IVLI.

It belongs to the UPF0761 family.

The protein localises to the cell inner membrane. The protein is UPF0761 membrane protein Ping_3482 of Psychromonas ingrahamii (strain DSM 17664 / CCUG 51855 / 37).